We begin with the raw amino-acid sequence, 294 residues long: Nucleotide-binding protein lp_0779 (294 aa).

12 to 19 (GMSGAGKT) is a binding site for ATP. GTP is bound at residue 62-65 (DLRS).

Belongs to the RapZ-like family.

Functionally, displays ATPase and GTPase activities. The polypeptide is Nucleotide-binding protein lp_0779 (Lactiplantibacillus plantarum (strain ATCC BAA-793 / NCIMB 8826 / WCFS1) (Lactobacillus plantarum)).